The chain runs to 547 residues: Methionine--tRNA ligase (547 aa).

The 'HIGH' region motif lies at 15-25 (PYANGSIHIGH). Zn(2+) contacts are provided by Cys146, Cys149, Cys159, and Cys162. Residues 332–336 (KLSKS) carry the 'KMSKS' region motif. Lys335 lines the ATP pocket.

It belongs to the class-I aminoacyl-tRNA synthetase family. MetG type 1 subfamily. As to quaternary structure, monomer. Zn(2+) serves as cofactor.

It is found in the cytoplasm. The catalysed reaction is tRNA(Met) + L-methionine + ATP = L-methionyl-tRNA(Met) + AMP + diphosphate. Functionally, is required not only for elongation of protein synthesis but also for the initiation of all mRNA translation through initiator tRNA(fMet) aminoacylation. This Buchnera aphidicola subsp. Acyrthosiphon pisum (strain APS) (Acyrthosiphon pisum symbiotic bacterium) protein is Methionine--tRNA ligase (metG).